The primary structure comprises 342 residues: Dihydroorotate dehydrogenase (quinone) (342 aa).

FMN is bound by residues 65–69 (AGLDK) and T89. Residue K69 participates in substrate binding. Substrate is bound at residue 114–118 (NRMGF). Positions 142 and 175 each coordinate FMN. Substrate is bound at residue N175. S178 acts as the Nucleophile in catalysis. N180 provides a ligand contact to substrate. FMN is bound by residues K220 and T248. 249–250 (NT) provides a ligand contact to substrate. Residues G271, G300, and 321 to 322 (YT) contribute to the FMN site.

Belongs to the dihydroorotate dehydrogenase family. Type 2 subfamily. As to quaternary structure, monomer. FMN serves as cofactor.

It is found in the cell membrane. It carries out the reaction (S)-dihydroorotate + a quinone = orotate + a quinol. The protein operates within pyrimidine metabolism; UMP biosynthesis via de novo pathway; orotate from (S)-dihydroorotate (quinone route): step 1/1. Catalyzes the conversion of dihydroorotate to orotate with quinone as electron acceptor. This Burkholderia pseudomallei (strain K96243) protein is Dihydroorotate dehydrogenase (quinone).